The sequence spans 442 residues: tRNA modification GTPase MnmE (442 aa).

Residues R21, E79, and K118 each contribute to the (6S)-5-formyl-5,6,7,8-tetrahydrofolate site. The TrmE-type G domain occupies G214 to N367. N224 contributes to the K(+) binding site. GTP-binding positions include N224–S229, S243–T249, and D268–G271. S228 is a binding site for Mg(2+). K(+)-binding residues include S243, I245, and T248. Residue T249 coordinates Mg(2+). K442 contacts (6S)-5-formyl-5,6,7,8-tetrahydrofolate.

It belongs to the TRAFAC class TrmE-Era-EngA-EngB-Septin-like GTPase superfamily. TrmE GTPase family. In terms of assembly, homodimer. Heterotetramer of two MnmE and two MnmG subunits. K(+) serves as cofactor.

Its subcellular location is the cytoplasm. In terms of biological role, exhibits a very high intrinsic GTPase hydrolysis rate. Involved in the addition of a carboxymethylaminomethyl (cmnm) group at the wobble position (U34) of certain tRNAs, forming tRNA-cmnm(5)s(2)U34. This chain is tRNA modification GTPase MnmE, found in Campylobacter jejuni subsp. jejuni serotype O:2 (strain ATCC 700819 / NCTC 11168).